The primary structure comprises 458 residues: Divalent metal cation transporter MntH (458 aa).

A run of 11 helical transmembrane segments spans residues 38 to 58 (GFWK…VGYM), 76 to 96 (SLLS…AMAA), 119 to 139 (GGFL…AEII), 151 to 171 (MPLI…LLLM), 180 to 200 (AVVA…VILA), 223 to 243 (MLYL…LFLG), 275 to 295 (LTMA…LFFG), 315 to 335 (IVGA…LLAS), 370 to 390 (LMSV…EAKI), 393 to 413 (LLTF…IPLV), and 437 to 457 (FISG…LGFV).

Belongs to the NRAMP family.

Its subcellular location is the cell membrane. Its function is as follows. H(+)-stimulated, divalent metal cation uptake system. The polypeptide is Divalent metal cation transporter MntH (Lacticaseibacillus casei (strain BL23) (Lactobacillus casei)).